A 465-amino-acid chain; its full sequence is Pancreatic triacylglycerol lipase (465 aa).

The first 16 residues, 1–16 (MLLLWILSLFLETVAG), serve as a signal peptide directing secretion. 2 cysteine pairs are disulfide-bonded: cysteine 20–cysteine 26 and cysteine 107–cysteine 118. The active-site Nucleophile is the serine 169. The Charge relay system role is filled by aspartate 193. Ca(2+) is bound by residues glutamate 204, arginine 207, aspartate 209, and aspartate 212. An intrachain disulfide couples cysteine 254 to cysteine 278. The Charge relay system role is filled by histidine 280. Disulfide bonds link cysteine 302-cysteine 313 and cysteine 316-cysteine 321. N-linked (GlcNAc...) asparagine glycosylation is found at asparagine 351, asparagine 398, and asparagine 425. Positions 355–465 (WRYRIAVTLS…EEVLLTLQPC (111 aa)) constitute a PLAT domain. A disulfide bridge connects residues cysteine 449 and cysteine 465.

Belongs to the AB hydrolase superfamily. Lipase family. As to quaternary structure, forms a 1:1 stoichiometric complex with (pro)colipase/CLPS.

Its subcellular location is the secreted. The catalysed reaction is a triacylglycerol + H2O = a diacylglycerol + a fatty acid + H(+). It carries out the reaction 1,2,3-tributanoylglycerol + H2O = dibutanoylglycerol + butanoate + H(+). It catalyses the reaction 1,2,3-tri-(9Z-octadecenoyl)-glycerol + H2O = di-(9Z)-octadecenoylglycerol + (9Z)-octadecenoate + H(+). The enzyme catalyses all-trans-retinyl hexadecanoate + H2O = all-trans-retinol + hexadecanoate + H(+). The catalysed reaction is 1,2-di-(9Z-octadecenoyl)-glycerol + H2O = (9Z-octadecenoyl)-glycerol + (9Z)-octadecenoate + H(+). Inhibited by bile salts, is reactivated by (pro)colipase/CLPS. Its function is as follows. Plays an important role in fat metabolism. It preferentially splits the esters of long-chain fatty acids at positions 1 and 3, producing mainly 2-monoacylglycerol and free fatty acids, and shows considerably higher activity against insoluble emulsified substrates than against soluble ones. The chain is Pancreatic triacylglycerol lipase (PNLIP) from Cavia porcellus (Guinea pig).